The sequence spans 146 residues: Probable acetyltransferase HI_0677 (146 aa).

The N-acetyltransferase domain occupies 1-146; the sequence is MKLFKAEQWN…ERLFELSLSC (146 aa).

The polypeptide is Probable acetyltransferase HI_0677 (Haemophilus influenzae (strain ATCC 51907 / DSM 11121 / KW20 / Rd)).